Reading from the N-terminus, the 129-residue chain is Cytochrome c oxidase subunit 13, mitochondrial (129 aa).

Residues 1-9 constitute a mitochondrion transit peptide; the sequence is MFRQCAKRY. Topologically, residues 10-43 are mitochondrial matrix; sequence ASSLPPNALKPAFGPPDKVAAQKFKESLMATEKH. A helical transmembrane segment spans residues 44-71; sequence AKDTSNMWVKISVWVALPAIALTAVNTY. Topologically, residues 72–129 are mitochondrial intermembrane; the sequence is FVEKEHAEHREHLKHVPDSEWPRDYEFMNIRSKPFFWGDGDKTLFWNPVVNRHIEHDD.

This sequence belongs to the cytochrome c oxidase subunit 6A family. As to quaternary structure, component of the cytochrome c oxidase (complex IV, CIV), a multisubunit enzyme composed of 12 subunits. The complex is composed of a catalytic core of 3 subunits COX1, COX2 and COX3, encoded in the mitochondrial DNA, and 9 supernumerary subunits COX4, COX5A (or COX5B), COX6, COX7, COX8, COX9, COX12, COX13 and COX26, which are encoded in the nuclear genome. The complex exists as a monomer or a dimer and forms supercomplexes (SCs) in the inner mitochondrial membrane with a dimer of ubiquinol-cytochrome c oxidoreductase (cytochrome b-c1 complex, complex III, CIII), resulting in 2 different assemblies (supercomplexes III(2)IV and III(2)IV(2)). COX13 interacts with COX1 and COX3 on the intermembrane space (IMS) and COX4 on the matrix side.

Its subcellular location is the mitochondrion inner membrane. The protein operates within energy metabolism; oxidative phosphorylation. Its function is as follows. Component of the cytochrome c oxidase, the last enzyme in the mitochondrial electron transport chain which drives oxidative phosphorylation. The respiratory chain contains 3 multisubunit complexes succinate dehydrogenase (complex II, CII), ubiquinol-cytochrome c oxidoreductase (cytochrome b-c1 complex, complex III, CIII) and cytochrome c oxidase (complex IV, CIV), that cooperate to transfer electrons derived from NADH and succinate to molecular oxygen, creating an electrochemical gradient over the inner membrane that drives transmembrane transport and the ATP synthase. Cytochrome c oxidase is the component of the respiratory chain that catalyzes the reduction of oxygen to water. Electrons originating from reduced cytochrome c in the intermembrane space (IMS) are transferred via the dinuclear copper A center (CU(A)) of COX2 and heme A of COX1 to the active site in COX1, a binuclear center (BNC) formed by heme A3 and copper B (CU(B)). The BNC reduces molecular oxygen to 2 water molecules using 4 electrons from cytochrome c in the IMS and 4 protons from the mitochondrial matrix. The polypeptide is Cytochrome c oxidase subunit 13, mitochondrial (COX13) (Saccharomyces cerevisiae (strain ATCC 204508 / S288c) (Baker's yeast)).